The primary structure comprises 212 residues: Probable plastid-lipid-associated protein 11, chloroplastic (212 aa).

The transit peptide at 1 to 25 (MALALSLSACSPPLRRTRRAGFRTS) directs the protein to the chloroplast.

The protein belongs to the PAP/fibrillin family.

It is found in the plastid. The protein localises to the chloroplast thylakoid. The chain is Probable plastid-lipid-associated protein 11, chloroplastic (PAP11) from Arabidopsis thaliana (Mouse-ear cress).